The following is a 372-amino-acid chain: GRASP65 homolog protein 1 (372 aa).

At M1 the chain carries N-acetylmethionine. PDZ GRASP-type domains follow at residues 66-183 and 188-276; these read SGLR…WTPL and FTYH…YGFL. The GRASP stretch occupies residues 66 to 292; the sequence is SGLRIVWVDE…KHCPQQAQQQ (227 aa). At S155 the chain carries Phosphoserine. Positions 312–372 are disordered; the sequence is VPSAFTAPPV…PPPQKQSSSD (61 aa).

As to quaternary structure, homodimer. Interacts with BUG1 (via C-terminus), probably forming a heterooligomer consisting of a GRH1 dimer and a BUG1 dimer. Interacts with COPII coat components SEC23, SEC24, SFB2 and SFB3. N-terminal acetylation; by N-terminal acetyltransferase NatC.

The protein resides in the cytoplasm. It localises to the golgi apparatus. It is found in the cis-Golgi network membrane. Functionally, involved in the spindle assembly checkpoint. Involved in ER to Golgi vesicle-mediated transport by either facilitating USO1-dependent and -independent tethering or increasing target accuracy of fusion events of COPII-coated vesicles. The protein is GRASP65 homolog protein 1 (GRH1) of Saccharomyces cerevisiae (strain ATCC 204508 / S288c) (Baker's yeast).